Consider the following 267-residue polypeptide: Malonyl-[acyl-carrier protein] O-methyltransferase (267 aa).

The protein belongs to the methyltransferase superfamily.

It catalyses the reaction malonyl-[ACP] + S-adenosyl-L-methionine = malonyl-[ACP] methyl ester + S-adenosyl-L-homocysteine. The protein operates within cofactor biosynthesis; biotin biosynthesis. Converts the free carboxyl group of a malonyl-thioester to its methyl ester by transfer of a methyl group from S-adenosyl-L-methionine (SAM). It allows to synthesize pimeloyl-ACP via the fatty acid synthetic pathway. In Yersinia pestis, this protein is Malonyl-[acyl-carrier protein] O-methyltransferase.